The following is a 408-amino-acid chain: tRNA(Met) cytidine acetate ligase (408 aa).

ATP is bound by residues 7-20, glycine 102, asparagine 170, and 195-196; these read IVEY…HKYH and RI.

This sequence belongs to the TmcAL family.

It localises to the cytoplasm. The catalysed reaction is cytidine(34) in elongator tRNA(Met) + acetate + ATP = N(4)-acetylcytidine(34) in elongator tRNA(Met) + AMP + diphosphate. In terms of biological role, catalyzes the formation of N(4)-acetylcytidine (ac(4)C) at the wobble position of elongator tRNA(Met), using acetate and ATP as substrates. First activates an acetate ion to form acetyladenylate (Ac-AMP) and then transfers the acetyl group to tRNA to form ac(4)C34. In Clostridium kluyveri (strain NBRC 12016), this protein is tRNA(Met) cytidine acetate ligase.